We begin with the raw amino-acid sequence, 142 residues long: Hemoglobin subunit alpha (142 aa).

One can recognise a Globin domain in the interval 2-142 (VLSPADKSNV…VSTVLTSKYR (141 aa)). Ser-4 is modified (phosphoserine). Lys-8 and Lys-12 each carry N6-succinyllysine. Residue Lys-17 is modified to N6-acetyllysine; alternate. N6-succinyllysine; alternate is present on Lys-17. Residue Tyr-25 is modified to Phosphotyrosine. Ser-36 is subject to Phosphoserine. N6-succinyllysine is present on Lys-41. Ser-50 is modified (phosphoserine). Residue His-59 coordinates O2. Residue His-88 coordinates heme b. Ser-103 carries the phosphoserine modification. Thr-109 bears the Phosphothreonine mark. Phosphoserine occurs at positions 125 and 132. A phosphothreonine mark is found at Thr-135 and Thr-138. Ser-139 is modified (phosphoserine).

This sequence belongs to the globin family. As to quaternary structure, heterotetramer of two alpha chains and two beta chains. Red blood cells.

In terms of biological role, involved in oxygen transport from the lung to the various peripheral tissues. Functionally, hemopressin acts as an antagonist peptide of the cannabinoid receptor CNR1. Hemopressin-binding efficiently blocks cannabinoid receptor CNR1 and subsequent signaling. The chain is Hemoglobin subunit alpha (HBA) from Ateles geoffroyi (Black-handed spider monkey).